The chain runs to 257 residues: MSSAPNGRKKRPSRSTRSSIFQISKPPLQTGDWERRGSGSESAHKSQRALDDCKMLVQEFNTQVALYRELVISIGDVSVSCPSLREEMHKTRTKGCEMARQAHQKLAAISGPEDGEIHPEICRLYIQLQCCLEMYTTEMLKSICLLGSLQFHRKGKEPGGGSKSLDCKIEECAETPALEDSSPSPVDIQQHSWQVSTDIENTERDMREMKNLLSKLRETMPLPLKNQDDSSLLNLTPYPLVRRRKRRFFGLCCLVSS.

The disordered stretch occupies residues 1-45 (MSSAPNGRKKRPSRSTRSSIFQISKPPLQTGDWERRGSGSESAHK). The span at 32 to 45 (DWERRGSGSESAHK) shows a compositional bias: basic and acidic residues. The Nuclear localization signal signature appears at 242–247 (RRRKRR). 2 S-palmitoyl cysteine lipidation sites follow: C252 and C253.

Belongs to the RGS7BP/RGS9BP family. Interacts with 'R7' family proteins RGS6, RGS7, RGS9 and RGS11. Component of some R7-Gbeta5 complex composed of some R7 protein (RGS6, RGS7, RGS9 or RGS11), Gbeta5 (GNB5) and RGS7BP. In terms of processing, palmitoylated. Undergoes rapid palmitoylation turnover. De novo and turnover palmitoylation are both mediated by ZDHHC2. Palmitoylation regulates the cell membrane and nuclear shuttling and the regulation of GPCR signaling. Upon depalmitoylation, it is targeted from the plasma membrane into the nucleus. GPCR signaling inhibits depalmitoylation and promotes localization to the plasma membrane.

Its subcellular location is the nucleus. The protein resides in the cytoplasm. It localises to the cell membrane. Its function is as follows. Regulator of G protein-coupled receptor (GPCR) signaling. Regulatory subunit of the R7-Gbeta5 complexes that acts by controlling the subcellular location of the R7-Gbeta5 complexes. When palmitoylated, it targets the R7-Gbeta5 complexes to the plasma membrane, leading to inhibit G protein alpha subunits. When it is unpalmitoylated, the R7-Gbeta5 complexes undergo a nuclear/cytoplasmic shuttling. May also act by controlling the proteolytic stability of R7 proteins, probably by protecting them from degradation. The polypeptide is Regulator of G-protein signaling 7-binding protein (RGS7BP) (Bos taurus (Bovine)).